The sequence spans 389 residues: Putative F-box protein At3g10240 (389 aa).

Residues 1 to 26 are disordered; that stretch reads MEQQEEKRKIKAYQRKSKRSKSGSSS. Residues 9–21 show a composition bias toward basic residues; that stretch reads KIKAYQRKSKRSK. Positions 21-66 constitute an F-box domain; that stretch reads KSGSSSIPLDLVSEILLRLPEKSVARFRCVSKPWSSITTEPYFINL.

The protein is Putative F-box protein At3g10240 of Arabidopsis thaliana (Mouse-ear cress).